The following is a 530-amino-acid chain: Arginine--tRNA ligase (530 aa).

The 'HIGH' region signature appears at 113–123 (ANPTGPLHIGH).

The protein belongs to the class-I aminoacyl-tRNA synthetase family. In terms of assembly, monomer.

The protein localises to the cytoplasm. The catalysed reaction is tRNA(Arg) + L-arginine + ATP = L-arginyl-tRNA(Arg) + AMP + diphosphate. In Campylobacter jejuni subsp. jejuni serotype O:6 (strain 81116 / NCTC 11828), this protein is Arginine--tRNA ligase.